Reading from the N-terminus, the 372-residue chain is F-box/kelch-repeat protein At2g44630 (372 aa).

Over residues 1-13 (MSNADEPPQKTNQ) the composition is skewed to polar residues. Residues 1–21 (MSNADEPPQKTNQPPSSSLTP) form a disordered region. The 47-residue stretch at 21-67 (PPSLFSLPVDIVLNILALVPKRYYPILCCVSKSLRSLIRSPEIHKTR) folds into the F-box domain. Kelch repeat units lie at residues 136–181 (EIYC…LVGG) and 183–228 (IYVI…SVSL).

The sequence is that of F-box/kelch-repeat protein At2g44630 from Arabidopsis thaliana (Mouse-ear cress).